The chain runs to 644 residues: Threonine--tRNA ligase (644 aa).

The 61-residue stretch at 1 to 61 folds into the TGS domain; it reads MVAITLPDGN…TQDASVEIVT (61 aa). Residues 242–533 form a catalytic region; sequence DHRKIGKALN…LIEHYAGWMP (292 aa). The Zn(2+) site is built by cysteine 333, histidine 384, and histidine 510.

This sequence belongs to the class-II aminoacyl-tRNA synthetase family. As to quaternary structure, homodimer. Requires Zn(2+) as cofactor.

It is found in the cytoplasm. It catalyses the reaction tRNA(Thr) + L-threonine + ATP = L-threonyl-tRNA(Thr) + AMP + diphosphate + H(+). Catalyzes the attachment of threonine to tRNA(Thr) in a two-step reaction: L-threonine is first activated by ATP to form Thr-AMP and then transferred to the acceptor end of tRNA(Thr). Also edits incorrectly charged L-seryl-tRNA(Thr). The protein is Threonine--tRNA ligase of Psychrobacter sp. (strain PRwf-1).